A 261-amino-acid polypeptide reads, in one-letter code: Indole-3-glycerol phosphate synthase (261 aa).

It belongs to the TrpC family.

It catalyses the reaction 1-(2-carboxyphenylamino)-1-deoxy-D-ribulose 5-phosphate + H(+) = (1S,2R)-1-C-(indol-3-yl)glycerol 3-phosphate + CO2 + H2O. It functions in the pathway amino-acid biosynthesis; L-tryptophan biosynthesis; L-tryptophan from chorismate: step 4/5. The chain is Indole-3-glycerol phosphate synthase from Campylobacter concisus (strain 13826).